A 273-amino-acid chain; its full sequence is Shikimate dehydrogenase (NADP(+)) (273 aa).

Residues 14-16 (SKS) and threonine 61 each bind shikimate. Lysine 65 serves as the catalytic Proton acceptor. Aspartate 77 provides a ligand contact to NADP(+). Positions 86 and 102 each coordinate shikimate. NADP(+) is bound by residues 127 to 131 (GAGGA), 151 to 156 (NRTGAR), and methionine 215. A shikimate-binding site is contributed by tyrosine 217. Glycine 239 contacts NADP(+).

Belongs to the shikimate dehydrogenase family. As to quaternary structure, homodimer.

The enzyme catalyses shikimate + NADP(+) = 3-dehydroshikimate + NADPH + H(+). Its pathway is metabolic intermediate biosynthesis; chorismate biosynthesis; chorismate from D-erythrose 4-phosphate and phosphoenolpyruvate: step 4/7. Involved in the biosynthesis of the chorismate, which leads to the biosynthesis of aromatic amino acids. Catalyzes the reversible NADPH linked reduction of 3-dehydroshikimate (DHSA) to yield shikimate (SA). This Thioalkalivibrio sulfidiphilus (strain HL-EbGR7) protein is Shikimate dehydrogenase (NADP(+)).